Consider the following 350-residue polypeptide: Protein-glutamate methylesterase/protein-glutamine glutaminase (350 aa).

The Response regulatory domain maps to 5–122; sequence RVLSVDDSAL…REGMLAYSEM (118 aa). D56 carries the 4-aspartylphosphate modification. A CheB-type methylesterase domain is found at 152-338; it reads LLSSEKLLVI…DLSQVVSQQM (187 aa). Residues S164, H190, and D286 contribute to the active site.

Belongs to the CheB family. Post-translationally, phosphorylated by CheA. Phosphorylation of the N-terminal regulatory domain activates the methylesterase activity.

Its subcellular location is the cytoplasm. The enzyme catalyses [protein]-L-glutamate 5-O-methyl ester + H2O = L-glutamyl-[protein] + methanol + H(+). The catalysed reaction is L-glutaminyl-[protein] + H2O = L-glutamyl-[protein] + NH4(+). Its function is as follows. Involved in chemotaxis. Part of a chemotaxis signal transduction system that modulates chemotaxis in response to various stimuli. Catalyzes the demethylation of specific methylglutamate residues introduced into the chemoreceptors (methyl-accepting chemotaxis proteins or MCP) by CheR. Also mediates the irreversible deamidation of specific glutamine residues to glutamic acid. The chain is Protein-glutamate methylesterase/protein-glutamine glutaminase from Enterobacter cloacae.